The following is a 241-amino-acid chain: Pyridoxine 5'-phosphate synthase (241 aa).

Residue asparagine 7 coordinates 3-amino-2-oxopropyl phosphate. Residue 9–10 (DH) participates in 1-deoxy-D-xylulose 5-phosphate binding. Position 18 (arginine 18) interacts with 3-amino-2-oxopropyl phosphate. Histidine 43 functions as the Proton acceptor in the catalytic mechanism. 1-deoxy-D-xylulose 5-phosphate contacts are provided by arginine 45 and histidine 50. Glutamate 70 serves as the catalytic Proton acceptor. Threonine 100 contributes to the 1-deoxy-D-xylulose 5-phosphate binding site. Histidine 190 (proton donor) is an active-site residue. 3-amino-2-oxopropyl phosphate-binding positions include glycine 191 and 212–213 (GH).

This sequence belongs to the PNP synthase family. Homooctamer; tetramer of dimers.

The protein resides in the cytoplasm. The enzyme catalyses 3-amino-2-oxopropyl phosphate + 1-deoxy-D-xylulose 5-phosphate = pyridoxine 5'-phosphate + phosphate + 2 H2O + H(+). Its pathway is cofactor biosynthesis; pyridoxine 5'-phosphate biosynthesis; pyridoxine 5'-phosphate from D-erythrose 4-phosphate: step 5/5. Catalyzes the complicated ring closure reaction between the two acyclic compounds 1-deoxy-D-xylulose-5-phosphate (DXP) and 3-amino-2-oxopropyl phosphate (1-amino-acetone-3-phosphate or AAP) to form pyridoxine 5'-phosphate (PNP) and inorganic phosphate. The sequence is that of Pyridoxine 5'-phosphate synthase from Bordetella avium (strain 197N).